The primary structure comprises 530 residues: NAD(+) kinase (530 aa).

Disordered stretches follow at residues 1–27 (MKENDMNNGVDKWVNEEDGRNDHHNNN), 57–99 (ISSE…KSSN), and 486–530 (SLEA…RFSV). A compositionally biased stretch (basic and acidic residues) spans 13–25 (WVNEEDGRNDHHN). Over residues 59-75 (SESSSRRSSLLNKDSSL) the composition is skewed to low complexity. A compositionally biased stretch (polar residues) spans 88–99 (INGTRGSSKSSN). Residues serine 499 and serine 503 each carry the phosphoserine modification. Over residues 499–508 (SDDESDDESV) the composition is skewed to acidic residues.

The protein belongs to the NAD kinase family. As to quaternary structure, homohexamer.

The enzyme catalyses NAD(+) + ATP = ADP + NADP(+) + H(+). Its function is as follows. Specifically phosphorylates NAD in the presence of ATP, dATP, or CTP as phosphoryl donors. This Saccharomyces cerevisiae (strain ATCC 204508 / S288c) (Baker's yeast) protein is NAD(+) kinase (UTR1).